Reading from the N-terminus, the 449-residue chain is Chromosomal replication initiator protein DnaA (449 aa).

Residues 1–71 (MPSSLWKHCL…LLSHYSSGRI (71 aa)) form a domain I, interacts with DnaA modulators region. The interval 71 to 112 (IEKALLEVGSCSLQPQPHIQAVELTSKSARSSSRVVDRIPES) is domain II. The tract at residues 113-329 (RLNKNYTFDS…GALRRVIAYS (217 aa)) is domain III, AAA+ region. Gly-157, Gly-159, Lys-160, and Thr-161 together coordinate ATP. The domain IV, binds dsDNA stretch occupies residues 330 to 449 (RFTHRPITME…YHNLLKKLST (120 aa)).

Belongs to the DnaA family. In terms of assembly, oligomerizes as a right-handed, spiral filament on DNA at oriC.

The protein resides in the cytoplasm. Its function is as follows. Plays an essential role in the initiation and regulation of chromosomal replication. ATP-DnaA binds to the origin of replication (oriC) to initiate formation of the DNA replication initiation complex once per cell cycle. Binds the DnaA box (a 9 base pair repeat at the origin) and separates the double-stranded (ds)DNA. Forms a right-handed helical filament on oriC DNA; dsDNA binds to the exterior of the filament while single-stranded (ss)DNA is stabiized in the filament's interior. The ATP-DnaA-oriC complex binds and stabilizes one strand of the AT-rich DNA unwinding element (DUE), permitting loading of DNA polymerase. After initiation quickly degrades to an ADP-DnaA complex that is not apt for DNA replication. Binds acidic phospholipids. This is Chromosomal replication initiator protein DnaA from Nitrosococcus oceani (strain ATCC 19707 / BCRC 17464 / JCM 30415 / NCIMB 11848 / C-107).